The chain runs to 481 residues: MEKIIEESKQGESLVLENKPENTKKLFIESYGCAMNFSDSEVVASILSDGGYNTTSVLEEADLVLVNTCSIRDKAEQTIRKRLEKYNAVKRTNPKMKVGVLGCMAERLKSQFLEEEKIVDLVVGPDAYKDLPNLLAEVEEGRDAINVILSKEETYGDISPVRLMSNGITALVSITRGCDNMCTFCVVPFTRGRERSREPQSIMAEIQDLWSKGFKEITLLGQNVDSYLWYGGGLKKDFVNASEMQKATAVDFDQLLEMVAVGFPKMRIRFSTSNPQDMHESILHVMAKYPNICKHIHLPVQSGSNRILKEMNRLHSREEYMALIDKIRAIVPDASISQDMIAGFPTETEQDHQDTMSLMEYVKYNFGYMYSYSERPGTLAGRKMKDDVEEETKARRLQEIVDLQQKHAWFRSEEFVGKTVEVLVEKVSKKSKDEFSGRNSQSITVVFPKENYKIGDFVNVKITSCTSGTLKGEAVGLSSMN.

In terms of domain architecture, MTTase N-terminal spans 24–140; sequence KKLFIESYGC…LPNLLAEVEE (117 aa). Cys-33, Cys-69, Cys-103, Cys-178, Cys-182, and Cys-185 together coordinate [4Fe-4S] cluster. One can recognise a Radical SAM core domain in the interval 164–411; sequence MSNGITALVS…DLQQKHAWFR (248 aa). In terms of domain architecture, TRAM spans 413–476; that stretch reads EEFVGKTVEV…SGTLKGEAVG (64 aa).

Belongs to the methylthiotransferase family. MiaB subfamily. In terms of assembly, monomer. The cofactor is [4Fe-4S] cluster.

It localises to the cytoplasm. It catalyses the reaction N(6)-dimethylallyladenosine(37) in tRNA + (sulfur carrier)-SH + AH2 + 2 S-adenosyl-L-methionine = 2-methylsulfanyl-N(6)-dimethylallyladenosine(37) in tRNA + (sulfur carrier)-H + 5'-deoxyadenosine + L-methionine + A + S-adenosyl-L-homocysteine + 2 H(+). Functionally, catalyzes the methylthiolation of N6-(dimethylallyl)adenosine (i(6)A), leading to the formation of 2-methylthio-N6-(dimethylallyl)adenosine (ms(2)i(6)A) at position 37 in tRNAs that read codons beginning with uridine. This Flavobacterium johnsoniae (strain ATCC 17061 / DSM 2064 / JCM 8514 / BCRC 14874 / CCUG 350202 / NBRC 14942 / NCIMB 11054 / UW101) (Cytophaga johnsonae) protein is tRNA-2-methylthio-N(6)-dimethylallyladenosine synthase.